Reading from the N-terminus, the 135-residue chain is Kappa-casein (135 aa).

O-linked (GalNAc...) threonine glycosylation occurs at Thr96. Phosphoserine; alternate is present on Ser114. Ser114 carries an O-linked (GalNAc...) serine; alternate glycan. An O-linked (GalNAc...) threonine glycan is attached at Thr131. A Phosphoserine modification is found at Ser132.

This sequence belongs to the kappa-casein family. Mammary gland specific. Secreted in milk.

The protein localises to the secreted. In terms of biological role, kappa-casein stabilizes micelle formation, preventing casein precipitation in milk. The sequence is that of Kappa-casein (CSN3) from Equus grevyi (Grevy's zebra).